A 1901-amino-acid chain; its full sequence is Protein TIC 214 (1901 aa).

Helical transmembrane passes span 18–38 (IINS…FSIG), 64–84 (FITG…HLAL), 87–107 (PHTI…WNNH), 124–144 (LSIQ…HFIL), 172–192 (VGWL…LVWI), and 221–241 (IFSI…PSPI). 3 disordered regions span residues 248 to 299 (EASK…EERW), 797 to 817 (REEQ…ENKR), and 1591 to 1618 (IQEA…LGPV). Over residues 256 to 268 (VESEEERDVEIET) the composition is skewed to acidic residues. A compositionally biased stretch (basic and acidic residues) spans 1591–1611 (IQEAKEPASQGEKERGSDIEN).

This sequence belongs to the TIC214 family. Part of the Tic complex.

The protein resides in the plastid. Its subcellular location is the chloroplast inner membrane. Functionally, involved in protein precursor import into chloroplasts. May be part of an intermediate translocation complex acting as a protein-conducting channel at the inner envelope. The chain is Protein TIC 214 from Nicotiana sylvestris (Wood tobacco).